The sequence spans 239 residues: Sugar fermentation stimulation protein homolog (239 aa).

This sequence belongs to the SfsA family.

In Methanobrevibacter smithii (strain ATCC 35061 / DSM 861 / OCM 144 / PS), this protein is Sugar fermentation stimulation protein homolog.